Here is a 544-residue protein sequence, read N- to C-terminus: Ribosomal oxygenase 1 (544 aa).

The tract at residues 1–78 is disordered; that stretch reads MERKHMSALS…HEGERDCREM (78 aa). The span at 10-19 shows a compositional bias: polar residues; sequence SIYQSLSGGK. Residues 42-53 show a composition bias toward basic residues; that stretch reads PSKKATKKKGTK. Positions 63 to 78 are enriched in basic and acidic residues; that stretch reads SSEKEKHEGERDCREM. The JmjC domain occupies 197–342; sequence CSIRMLNPQA…DLMLKLMPAA (146 aa). Positions 243, 245, and 308 each coordinate Fe cation.

The protein belongs to the ROX family. NO66 subfamily. Requires Fe(2+) as cofactor.

The protein resides in the nucleus. The protein localises to the nucleolus. It is found in the nucleoplasm. The enzyme catalyses N(6),N(6)-dimethyl-L-lysyl(36)-[histone H3] + 2 2-oxoglutarate + 2 O2 = L-lysyl(36)-[histone H3] + 2 formaldehyde + 2 succinate + 2 CO2. It catalyses the reaction N(6)-methyl-L-lysyl-[protein] + 2-oxoglutarate + O2 = L-lysyl-[protein] + formaldehyde + succinate + CO2. The catalysed reaction is L-histidyl-[protein] + 2-oxoglutarate + O2 = (3S)-3-hydroxy-L-histidyl-[protein] + succinate + CO2. Functionally, oxygenase that can act as both a histone lysine demethylase and a ribosomal histidine hydroxylase. Specifically demethylates 'Lys-4' (H3K4me) and 'Lys-36' (H3K36me) of histone H3, thereby playing a central role in histone code. Preferentially demethylates trimethylated H3 'Lys-4' (H3K4me3) and monomethylated H3 'Lys-4' (H3K4me1) residues, while it has weaker activity for dimethylated H3 'Lys-36' (H3K36me2). Also catalyzes demethylation of non-histone proteins. Also catalyzes the hydroxylation of 60S ribosomal protein L8 on 'His-216', thereby playing a role in ribosome biogenesis. The protein is Ribosomal oxygenase 1 (riox1) of Danio rerio (Zebrafish).